Here is a 66-residue protein sequence, read N- to C-terminus: Protein translocase subunit SecE (66 aa).

Residues 29-49 traverse the membrane as a helical segment; it reads LVASTLVVVVAVFIFSLTCLV.

Belongs to the SecE/SEC61-gamma family. As to quaternary structure, component of the Sec protein translocase complex. Heterotrimer consisting of SecY, SecE and SecG subunits. The heterotrimers can form oligomers, although 1 heterotrimer is thought to be able to translocate proteins. Interacts with the ribosome. Interacts with SecDF, and other proteins may be involved. Interacts with SecA.

It localises to the cell inner membrane. Functionally, essential subunit of the Sec protein translocation channel SecYEG. Clamps together the 2 halves of SecY. May contact the channel plug during translocation. The sequence is that of Protein translocase subunit SecE from Rickettsia rickettsii.